A 1464-amino-acid chain; its full sequence is DNA polymerase III PolC-type (1464 aa).

The 157-residue stretch at 426–582 folds into the Exonuclease domain; that stretch reads YVVFDVETTG…YDAEATGRLL (157 aa).

Belongs to the DNA polymerase type-C family. PolC subfamily.

The protein resides in the cytoplasm. The enzyme catalyses DNA(n) + a 2'-deoxyribonucleoside 5'-triphosphate = DNA(n+1) + diphosphate. In terms of biological role, required for replicative DNA synthesis. This DNA polymerase also exhibits 3' to 5' exonuclease activity. The sequence is that of DNA polymerase III PolC-type from Streptococcus thermophilus (strain CNRZ 1066).